The following is a 277-amino-acid chain: Energy-coupling factor transporter ATP-binding protein EcfA1 (277 aa).

The ABC transporter domain maps to 5–242 (VKVNNISFEY…IKMLKEIGLD (238 aa)). 41–48 (GHNGSGKS) serves as a coordination point for ATP.

The protein belongs to the ABC transporter superfamily. Energy-coupling factor EcfA family. Forms a stable energy-coupling factor (ECF) transporter complex composed of 2 membrane-embedded substrate-binding proteins (S component), 2 ATP-binding proteins (A component) and 2 transmembrane proteins (T component).

Its subcellular location is the cell membrane. Functionally, ATP-binding (A) component of a common energy-coupling factor (ECF) ABC-transporter complex. Unlike classic ABC transporters this ECF transporter provides the energy necessary to transport a number of different substrates. The protein is Energy-coupling factor transporter ATP-binding protein EcfA1 of Clostridioides difficile (strain 630) (Peptoclostridium difficile).